A 216-amino-acid chain; its full sequence is Ras-like protein rasW (216 aa).

Residue 16 to 23 coordinates GTP; the sequence is GDGGVGKT. Positions 38-46 match the Effector region motif; the sequence is YDPTIEDSY. Residues 63-67 and 122-125 contribute to the GTP site; these read DTAGQ and NKID. The segment at 171-193 is disordered; the sequence is KRKEDPQSHKPSKDSDSKKPLVN. Over residues 172-189 the composition is skewed to basic and acidic residues; the sequence is RKEDPQSHKPSKDSDSKK. Position 213 is a cysteine methyl ester (Cys213). Cys213 is lipidated: S-geranylgeranyl cysteine. A propeptide spans 214-216 (removed in mature form); the sequence is KMM.

This sequence belongs to the small GTPase superfamily. Ras family.

The protein resides in the cell membrane. It carries out the reaction GTP + H2O = GDP + phosphate + H(+). Functionally, ras proteins bind GDP/GTP and possess intrinsic GTPase activity. This chain is Ras-like protein rasW (rasW), found in Dictyostelium discoideum (Social amoeba).